A 770-amino-acid polypeptide reads, in one-letter code: Metallothionein expression activator (770 aa).

A disordered region spans residues 77-97 (LVPSPKTGDGSSDKKNIDRTW). S80, S122, S247, S249, and S253 each carry phosphoserine. T259 bears the Phosphothreonine mark. Residues 286 to 323 (PPPTLISPRMSNTSINGSPSRKYHRQRYPNKSPESNGL) are disordered. Polar residues predominate over residues 294–304 (RMSNTSINGSP). Phosphoserine occurs at positions 385, 392, and 483. Residues T486 and T501 each carry the phosphothreonine modification. Residue S564 is modified to Phosphoserine. C2H2-type zinc fingers lie at residues 603–627 (FECLYPNCNKVFKRRYNIRSHIQTH) and 633–657 (YSCDFPGCTKAFVRNHDLIRHKISH). The C2H2-type 3; atypical zinc finger occupies 662–685 (YICPCGKRFNREDALMVHRSRMIC). The segment at 699 to 770 (LTSPKKSLLD…RTLSNETDAL (72 aa)) is disordered. A compositionally biased stretch (basic and acidic residues) spans 705-745 (SLLDSPHDTSPVKETIARDKDGSVLMKMEEQLRDDMRKHGL). A phosphoserine mark is found at S709 and S714. Over residues 754 to 770 (AHEQNSNRTLSNETDAL) the composition is skewed to polar residues.

The protein localises to the nucleus. Functionally, plays a role in regulating basal-level expression of CUP1. Activates EGT2 transcription in the absence of SWI5. The polypeptide is Metallothionein expression activator (ACE2) (Saccharomyces cerevisiae (strain ATCC 204508 / S288c) (Baker's yeast)).